A 497-amino-acid chain; its full sequence is Beta-glucosidase 8 (497 aa).

The signal sequence occupies residues Met-1–Ala-22. An a beta-D-glucoside-binding site is contributed by Gln-42. Asn-65 is a glycosylation site (N-linked (GlcNAc...) asparagine). A beta-D-glucoside-binding positions include His-139 and Asn-184–Glu-185. The active-site Proton donor is the Glu-185. An N-linked (GlcNAc...) asparagine glycan is attached at Asn-202. Residue Tyr-319 coordinates a beta-D-glucoside. N-linked (GlcNAc...) asparagine glycosylation occurs at Asn-354. Glu-387, Trp-430, and Phe-446 together coordinate a beta-D-glucoside. The active-site Nucleophile is the Glu-387. Asn-452, Asn-474, and Asn-490 each carry an N-linked (GlcNAc...) asparagine glycan.

Belongs to the glycosyl hydrolase 1 family.

It carries out the reaction Hydrolysis of terminal, non-reducing beta-D-glucosyl residues with release of beta-D-glucose.. This chain is Beta-glucosidase 8, found in Arabidopsis thaliana (Mouse-ear cress).